A 370-amino-acid chain; its full sequence is Chaperone protein DnaJ (370 aa).

The region spanning 6–70 is the J domain; that stretch reads DFYEILGVSK…QKRANYDQFG (65 aa). The CR-type zinc-finger motif lies at 134 to 216; it reads GANKSVTLNV…CHGKGFNTKR (83 aa). Residues Cys147, Cys150, Cys164, Cys167, Cys190, Cys193, Cys204, and Cys207 each contribute to the Zn(2+) site. 4 CXXCXGXG motif repeats span residues 147 to 154, 164 to 171, 190 to 197, and 204 to 211; these read CTSCHGSG, CSRCGGTG, CPDCGGSG, and CGECHGKG.

This sequence belongs to the DnaJ family. In terms of assembly, homodimer. Requires Zn(2+) as cofactor.

It is found in the cytoplasm. In terms of biological role, participates actively in the response to hyperosmotic and heat shock by preventing the aggregation of stress-denatured proteins and by disaggregating proteins, also in an autonomous, DnaK-independent fashion. Unfolded proteins bind initially to DnaJ; upon interaction with the DnaJ-bound protein, DnaK hydrolyzes its bound ATP, resulting in the formation of a stable complex. GrpE releases ADP from DnaK; ATP binding to DnaK triggers the release of the substrate protein, thus completing the reaction cycle. Several rounds of ATP-dependent interactions between DnaJ, DnaK and GrpE are required for fully efficient folding. Also involved, together with DnaK and GrpE, in the DNA replication of plasmids through activation of initiation proteins. The chain is Chaperone protein DnaJ from Erysipelothrix rhusiopathiae.